The sequence spans 489 residues: Glycogen synthase (489 aa).

R20 lines the ADP-alpha-D-glucose pocket.

Belongs to the glycosyltransferase 1 family. Bacterial/plant glycogen synthase subfamily.

It carries out the reaction [(1-&gt;4)-alpha-D-glucosyl](n) + ADP-alpha-D-glucose = [(1-&gt;4)-alpha-D-glucosyl](n+1) + ADP + H(+). The protein operates within glycan biosynthesis; glycogen biosynthesis. Functionally, synthesizes alpha-1,4-glucan chains using ADP-glucose. This Chlorobium phaeovibrioides (strain DSM 265 / 1930) (Prosthecochloris vibrioformis (strain DSM 265)) protein is Glycogen synthase.